Reading from the N-terminus, the 353-residue chain is Anthranilate phosphoribosyltransferase (353 aa).

5-phospho-alpha-D-ribose 1-diphosphate is bound by residues Gly-86, 89-90 (GD), 96-99 (NVST), 114-122 (KHGNRAVSG), and Ser-126. Gly-86 is a binding site for anthranilate. Ser-98 serves as a coordination point for Mg(2+). Asn-117 is a binding site for anthranilate. Arg-172 is a binding site for anthranilate. Residues Asp-231 and Glu-232 each coordinate Mg(2+).

This sequence belongs to the anthranilate phosphoribosyltransferase family. In terms of assembly, homodimer. The cofactor is Mg(2+).

It carries out the reaction N-(5-phospho-beta-D-ribosyl)anthranilate + diphosphate = 5-phospho-alpha-D-ribose 1-diphosphate + anthranilate. It functions in the pathway amino-acid biosynthesis; L-tryptophan biosynthesis; L-tryptophan from chorismate: step 2/5. Functionally, catalyzes the transfer of the phosphoribosyl group of 5-phosphorylribose-1-pyrophosphate (PRPP) to anthranilate to yield N-(5'-phosphoribosyl)-anthranilate (PRA). This Pseudomonas syringae pv. syringae (strain B728a) protein is Anthranilate phosphoribosyltransferase.